The chain runs to 447 residues: Clusterin (447 aa).

An N-terminal signal peptide occupies residues 1–22; sequence MKTLLLCVGLLLSWERGQVLGD. The short motif at 77-80 is the Nuclear localization signal element; it reads KKNK. Residues N85 and N102 are each glycosylated (N-linked (GlcNAc...) asparagine). Cystine bridges form between C101–C311, C112–C303, C115–C300, C120–C293, and C128–C283. Phosphoserine is present on S132. Residues N144, N289, N326, N352, and N372 are each glycosylated (N-linked (GlcNAc...) asparagine). Position 394 is a phosphoserine (S394). Positions 441–445 match the Nuclear localization signal motif; it reads RKKKR.

Belongs to the clusterin family. As to quaternary structure, antiparallel disulfide-linked heterodimer of an alpha chain and a beta chain. Self-associates and forms higher oligomers. Interacts with a broad range of misfolded proteins, including APP, APOC2 and LYZ. Slightly acidic pH promotes interaction with misfolded proteins. Forms high-molecular weight oligomers upon interaction with misfolded proteins. Interacts with APOA1, LRP2, CLUAP1 and PON1. Interacts with the complement membrane attack complex. Interacts (via alpha chain) with XRCC6. Interacts with SYVN1, COMMD1, BTRC, CUL1 and with ubiquitin and SCF (SKP1-CUL1-F-box protein) E3 ubiquitin-protein ligase complexes. Interacts (via alpha chain) with BAX in stressed cells, where BAX undergoes a conformation change leading to association with the mitochondrial membrane. Does not interact with BAX in unstressed cells. Found in a complex with LTF, CLU, EPPIN and SEMG1. Interacts (immaturely glycosylated pre-secreted form) with HSPA5; this interaction promotes CLU stability and facilitates stress-induced CLU retrotranslocation from the secretory pathway to the mitochondria, thereby reducing stress-induced apoptosis by stabilizing mitochondrial membrane integrity. Interacts with BCL2L1; this interaction releases and activates BAX and promotes cell death. Interacts with TGFBR2 and ACVR1. Interacts (secreted form) with STMN3; this interaction may act as an important modulator during neuronal differentiation. Interacts with VLDLR and LRP8. Proteolytically cleaved on its way through the secretory system, probably within the Golgi lumen. Proteolytic cleavage is not necessary for its chaperone activity. All non-secreted forms are not proteolytically cleaved. Chaperone activity of uncleaved forms is dependent on a non-reducing environment. In terms of processing, polyubiquitinated, leading to proteasomal degradation. Under cellular stress, the intracellular level of cleaved form is reduced due to proteasomal degradation. Post-translationally, heavily N-glycosylated. About 30% of the protein mass is comprised of complex N-linked carbohydrate. Endoplasmic reticulum (ER) stress induces changes in glycosylation status and increases level of hypoglycosylated forms. Core carbohydrates are essential for chaperone activity. Non-secreted forms are hypoglycosylated or unglycosylated.

It is found in the secreted. The protein localises to the nucleus. It localises to the cytoplasm. The protein resides in the mitochondrion membrane. Its subcellular location is the cytosol. It is found in the microsome. The protein localises to the endoplasmic reticulum. It localises to the mitochondrion. The protein resides in the perinuclear region. Its subcellular location is the cytoplasmic vesicle. It is found in the secretory vesicle. The protein localises to the chromaffin granule. Functions as extracellular chaperone that prevents aggregation of non native proteins. Prevents stress-induced aggregation of blood plasma proteins. Inhibits formation of amyloid fibrils by APP, APOC2, B2M, CALCA, CSN3, SNCA and aggregation-prone LYZ variants (in vitro). Does not require ATP. Maintains partially unfolded proteins in a state appropriate for subsequent refolding by other chaperones, such as HSPA8/HSC70. Does not refold proteins by itself. Binding to cell surface receptors triggers internalization of the chaperone-client complex and subsequent lysosomal or proteasomal degradation. When secreted, protects cells against apoptosis and against cytolysis by complement: inhibits assembly of the complement membrane attack complex (MAC) by preventing polymerization of C9 pore component of the MAC complex. Intracellular forms interact with ubiquitin and SCF (SKP1-CUL1-F-box protein) E3 ubiquitin-protein ligase complexes and promote the ubiquitination and subsequent proteasomal degradation of target proteins. Promotes proteasomal degradation of COMMD1 and IKBKB. Modulates NF-kappa-B transcriptional activity. Following stress, promotes apoptosis. Inhibits apoptosis when associated with the mitochondrial membrane by interference with BAX-dependent release of cytochrome c into the cytoplasm. Plays a role in the regulation of cell proliferation. An intracellular form suppresses stress-induced apoptosis by stabilizing mitochondrial membrane integrity through interaction with HSPA5. Secreted form does not affect caspase or BAX-mediated intrinsic apoptosis and TNF-induced NF-kappa-B-activity. Secreted form act as an important modulator during neuronal differentiation through interaction with STMN3. Plays a role in the clearance of immune complexes that arise during cell injury. This chain is Clusterin (CLU), found in Oryctolagus cuniculus (Rabbit).